Reading from the N-terminus, the 445-residue chain is Methylenetetrahydrofolate--tRNA-(uracil-5-)-methyltransferase TrmFO (445 aa).

FAD is bound at residue 9–14; it reads GGGLAG.

This sequence belongs to the MnmG family. TrmFO subfamily. Requires FAD as cofactor.

Its subcellular location is the cytoplasm. It carries out the reaction uridine(54) in tRNA + (6R)-5,10-methylene-5,6,7,8-tetrahydrofolate + NADH + H(+) = 5-methyluridine(54) in tRNA + (6S)-5,6,7,8-tetrahydrofolate + NAD(+). It catalyses the reaction uridine(54) in tRNA + (6R)-5,10-methylene-5,6,7,8-tetrahydrofolate + NADPH + H(+) = 5-methyluridine(54) in tRNA + (6S)-5,6,7,8-tetrahydrofolate + NADP(+). In terms of biological role, catalyzes the folate-dependent formation of 5-methyl-uridine at position 54 (M-5-U54) in all tRNAs. This is Methylenetetrahydrofolate--tRNA-(uracil-5-)-methyltransferase TrmFO from Rhizorhabdus wittichii (strain DSM 6014 / CCUG 31198 / JCM 15750 / NBRC 105917 / EY 4224 / RW1) (Sphingomonas wittichii).